The chain runs to 82 residues: UPF0154 protein SPD_1662 (82 aa).

The chain crosses the membrane as a helical span at residues 5-25; that stretch reads LAIVLIVLAFLGGALGGMYLV.

It belongs to the UPF0154 family.

The protein localises to the cell membrane. This Streptococcus pneumoniae serotype 2 (strain D39 / NCTC 7466) protein is UPF0154 protein SPD_1662.